Reading from the N-terminus, the 98-residue chain is Small ribosomal subunit protein bS20 (98 aa).

Positions 1-12 (MAPRKPSKKVGP) are enriched in basic residues. Residues 1 to 31 (MAPRKPSKKVGPQKRPSAEKRVITSKKKQLR) are disordered.

It belongs to the bacterial ribosomal protein bS20 family.

In terms of biological role, binds directly to 16S ribosomal RNA. The protein is Small ribosomal subunit protein bS20 of Chlamydia trachomatis serovar L2 (strain ATCC VR-902B / DSM 19102 / 434/Bu).